Reading from the N-terminus, the 218-residue chain is GTP cyclohydrolase 1 (218 aa).

Zn(2+) contacts are provided by Cys-109, His-112, and Cys-180.

It belongs to the GTP cyclohydrolase I family. As to quaternary structure, toroid-shaped homodecamer, composed of two pentamers of five dimers.

It catalyses the reaction GTP + H2O = 7,8-dihydroneopterin 3'-triphosphate + formate + H(+). It functions in the pathway cofactor biosynthesis; 7,8-dihydroneopterin triphosphate biosynthesis; 7,8-dihydroneopterin triphosphate from GTP: step 1/1. This Aeromonas hydrophila subsp. hydrophila (strain ATCC 7966 / DSM 30187 / BCRC 13018 / CCUG 14551 / JCM 1027 / KCTC 2358 / NCIMB 9240 / NCTC 8049) protein is GTP cyclohydrolase 1.